The chain runs to 186 residues: Peptidyl-tRNA hydrolase (186 aa).

Tyrosine 14 serves as a coordination point for tRNA. The active-site Proton acceptor is the histidine 19. Residues tyrosine 60 and asparagine 62 each contribute to the tRNA site.

This sequence belongs to the PTH family. In terms of assembly, monomer.

It localises to the cytoplasm. The catalysed reaction is an N-acyl-L-alpha-aminoacyl-tRNA + H2O = an N-acyl-L-amino acid + a tRNA + H(+). In terms of biological role, hydrolyzes ribosome-free peptidyl-tRNAs (with 1 or more amino acids incorporated), which drop off the ribosome during protein synthesis, or as a result of ribosome stalling. Catalyzes the release of premature peptidyl moieties from peptidyl-tRNA molecules trapped in stalled 50S ribosomal subunits, and thus maintains levels of free tRNAs and 50S ribosomes. This is Peptidyl-tRNA hydrolase from Mycoplasmopsis pulmonis (strain UAB CTIP) (Mycoplasma pulmonis).